The chain runs to 266 residues: F-box only protein 50 (266 aa).

A compositionally biased stretch (basic and acidic residues) spans 1–16 (MEKTQDRDTLSGRMEA). A disordered region spans residues 1-53 (MEKTQDRDTLSGRMEAEGSLNSEELPPHPQSPPPPPSPRSPTSPVTPELPQPN). Pro residues predominate over residues 27 to 41 (PHPQSPPPPPSPRSP). Phosphoserine occurs at positions 31, 37, 40, and 43. Thr46 is subject to Phosphothreonine. Residues 86 to 264 (LFLERPLYRN…VTDSSVSVQL (179 aa)) enclose the FBA domain.

In terms of tissue distribution, strongly expressed in kidney. Weakly expressed in stomach, colon, duodenum and prostate.

Its subcellular location is the cytoplasm. Promotes cell proliferation. The protein is F-box only protein 50 (Nccrp1) of Mus musculus (Mouse).